The chain runs to 211 residues: Large ribosomal subunit protein bL25 (211 aa).

A compositionally biased stretch (basic and acidic residues) spans 1 to 18 (MAKTHEIKAERRADEGKG). The tract at residues 1–20 (MAKTHEIKAERRADEGKGAS) is disordered.

The protein belongs to the bacterial ribosomal protein bL25 family. CTC subfamily. In terms of assembly, part of the 50S ribosomal subunit; part of the 5S rRNA/L5/L18/L25 subcomplex. Contacts the 5S rRNA. Binds to the 5S rRNA independently of L5 and L18.

This is one of the proteins that binds to the 5S RNA in the ribosome where it forms part of the central protuberance. The protein is Large ribosomal subunit protein bL25 of Xanthomonas oryzae pv. oryzae (strain MAFF 311018).